The following is a 118-amino-acid chain: Alpha-amylase inhibitor 4 (118 aa).

Cystine bridges form between Cys-7–Cys-60, Cys-21–Cys-49, Cys-30–Cys-82, and Cys-50–Cys-101.

The protein belongs to the protease inhibitor I6 (cereal trypsin/alpha-amylase inhibitor) family.

The protein resides in the secreted. Alpha-amylase inhibitor. This chain is Alpha-amylase inhibitor 4, found in Sorghum bicolor (Sorghum).